We begin with the raw amino-acid sequence, 62 residues long: UPF0434 protein FTM_0733 (62 aa).

Belongs to the UPF0434 family.

The polypeptide is UPF0434 protein FTM_0733 (Francisella tularensis subsp. mediasiatica (strain FSC147)).